A 250-amino-acid chain; its full sequence is 3-deoxy-manno-octulosonate cytidylyltransferase (250 aa).

This sequence belongs to the KdsB family.

The protein localises to the cytoplasm. The catalysed reaction is 3-deoxy-alpha-D-manno-oct-2-ulosonate + CTP = CMP-3-deoxy-beta-D-manno-octulosonate + diphosphate. Its pathway is nucleotide-sugar biosynthesis; CMP-3-deoxy-D-manno-octulosonate biosynthesis; CMP-3-deoxy-D-manno-octulosonate from 3-deoxy-D-manno-octulosonate and CTP: step 1/1. It functions in the pathway bacterial outer membrane biogenesis; lipopolysaccharide biosynthesis. In terms of biological role, activates KDO (a required 8-carbon sugar) for incorporation into bacterial lipopolysaccharide in Gram-negative bacteria. The chain is 3-deoxy-manno-octulosonate cytidylyltransferase from Geobacter sulfurreducens (strain ATCC 51573 / DSM 12127 / PCA).